The chain runs to 86 residues: Large ribosomal subunit protein bL27 (86 aa).

The disordered stretch occupies residues M1–K24.

Belongs to the bacterial ribosomal protein bL27 family.

The polypeptide is Large ribosomal subunit protein bL27 (Rickettsia felis (strain ATCC VR-1525 / URRWXCal2) (Rickettsia azadi)).